A 509-amino-acid polypeptide reads, in one-letter code: Maturase K (509 aa).

It belongs to the intron maturase 2 family. MatK subfamily.

The protein resides in the plastid. It is found in the chloroplast. In terms of biological role, usually encoded in the trnK tRNA gene intron. Probably assists in splicing its own and other chloroplast group II introns. This Nicotiana paniculata protein is Maturase K.